Reading from the N-terminus, the 1244-residue chain is MDRSEIVARENPVITQRVTNLLRTNAPLLFMPIDIHEVRYGAYMLFMYGSLENGYKAEVRIENIPVFFDVQIESDNTNQLFLKSLLAAENITYERLETLTQRPVMGYREKEKEFAPYIRIFFKSLYERRKAITYLNNMGYNTAADDTTCYYRMVSRELKLPLTTWIQLQHYSYEPRGLVHRFSVTPEDLVSYQDDGPTDHSIVMAYDIETYSPVKGTVPDPNQANDVVFMICMRIFWIHSTEPLASTCITMAPCKKSPEWTTIVCSSEKNLLLSFAEQFSRWAPDICTGFNDSRYDWPFIVEKSMQHGILEEVFNKMSLFWPQKLDTILKCYYVKEKRVKISAEKSIISSFLHTPGCLPIDVRNMCMQLYPKAEKTSLKAFLENCGLDSKVDLPYHLMWKYYETRDSEKMADVAYYCIIDAQRCQDLLVRHNVIPDRREVGILSYTSLYDCIYYAGGHKVCNMLIAYAIHDEYGRIACSTIARGKREHGKYPGAFVIDPVKGLEQDKPTTGLDFASLYPSLIMAYNFSPEKFVASRDEANSLMAKGESLHYVSFHFNNRLVEGWFVRHNNVPDKMGLYPKVLIDLLNKRTALKQELKKLGEKKECIHESHPGFKELQFRHAMVDAKQKALKIFMNTFYGEAGNNLSPFFLLPLAGGVTSSGQYNLKLVYNFVINKGYGIKYGDTDSLYITCPDSLYTEVTDAYLNSQKTTKHYEQLCHEKVLLSMKAMSTLCAEVNEYLRQDNGTSYLRMAYEEVLFPVCFTGKKKYYGIAHVNTPNFNTKELFIRGIDIIKQGQTKLTKTIGTRIMEESMKLRRPEDHRPPLIEIVKTVLKDAVVNMKQWNFEDFIQTDAWRPDKDNKAVQIFMSRMHARREQLKKHGAAATSQFAEPEPGERFSYVIVEKQVQFDIQGHRTDTTRKGDKMEYVSEAKAKNLPIDILFYINNYVLGLCARFINENEEFQPPGNVSNKDEYAQRRAKSYLQKFVQSIHPKDKSVIKQGIVHRQCYKYVHQEIKKKIGIFADLYKEFFNNTTNPIESFIQSTQFMIHYFDEEQKVNHSMKKMVEQHAALAGNPAGNPAGNPAGNPAGNPAGNPAGNPAGNPAGNPAGNPAGNPAGNPAGNPASNALMRAIFTQLITEEKKIVQALYNKGDEIHDLLTYIINNINYKIATFQTKQMLTFELSSTHVELLLKLNKTWLILVGIRVAKKHLHALLGLHNNEPPSKTFIQQAIEEECGSIKPSCYDFIS.

Repeat copies occupy residues 1069 to 1072, 1073 to 1076, 1077 to 1080, 1081 to 1084, 1085 to 1088, 1089 to 1092, 1093 to 1096, 1097 to 1100, 1101 to 1104, 1105 to 1108, 1109 to 1112, 1113 to 1116, and 1117 to 1120. A disordered region spans residues 1069-1118; it reads AGNPAGNPAGNPAGNPAGNPAGNPAGNPAGNPAGNPAGNPAGNPAGNPAG. Residues 1069-1120 are 13 X 4 AA tandem repeats of A-G-N-P; it reads AGNPAGNPAGNPAGNPAGNPAGNPAGNPAGNPAGNPAGNPAGNPAGNPAGNP.

Belongs to the DNA polymerase type-B family.

The catalysed reaction is DNA(n) + a 2'-deoxyribonucleoside 5'-triphosphate = DNA(n+1) + diphosphate. In terms of biological role, DNA-directed DNA polymerase involved in viral DNA replication. In African swine fever virus (isolate Pig/Portugal/Lis 60/1960) (ASFV), this protein is DNA polymerase beta (DPOL).